Reading from the N-terminus, the 498-residue chain is Protein MGF 505-5R (498 aa).

It belongs to the asfivirus MGF 505 family.

Plays a role in virus cell tropism, and may be required for efficient virus replication in macrophages. The polypeptide is Protein MGF 505-5R (African swine fever virus (strain Badajoz 1971 Vero-adapted) (Ba71V)).